Consider the following 452-residue polypeptide: MEKQNLKNTEVNLIYGVDDDLDLPKKVLFGLQHIFAAFGGIIVVPLVIATSLGFDSKVTTALISASILGSGLATIIQAKGVGKVGARVACIMGTDFTFVSPAISVGSVLGLPGIIGATILGSLFEVILSFFIKPLMKFFPPLVTGTVVALIGLTLLPVSIDWAAGGAGSANYASLENLAVAMFVLVITLLLNNYGKGMISSASILIGIVVGYIVCIPLGLVDFTPVKEASWLSFPKILEFGVTFDAKAVMAFIPAYFVATIGTVGCLKAIGETSNIDIGDKRVAAGVLSDGVGSALGGLVGSCPNTSFSQNIGIISLTKVASRHVAVMAGILLVILGFLPKVAAIITGIPNPVLGGVGIMMFGTVAAAGIRTLSNIKLTERNLLIIAISMGLGLGVTFRPDVIHNLPEAIRMIFSSGISTGTIAALILNAVLKESPTSMEFENMYDEEKKAS.

A run of 12 helical transmembrane segments spans residues 34-54 (IFAA…SLGF), 58-78 (VTTA…IIQA), 83-103 (KVGA…SPAI), 108-128 (VLGL…EVIL), 138-158 (FFPP…LLPV), 172-192 (YASL…LLLN), 201-221 (SASI…LGLV), 250-270 (MAFI…LKAI), 326-346 (AVMA…AAII), 348-368 (GIPN…VAAA), 383-403 (LLII…PDVI), and 412-432 (MIFS…NAVL).

The protein belongs to the nucleobase:cation symporter-2 (NCS2) (TC 2.A.40) family.

The protein resides in the cell membrane. This Clostridium perfringens (strain 13 / Type A) protein is Putative purine permease CPE0397 (cpx).